The chain runs to 247 residues: 3-deoxy-manno-octulosonate cytidylyltransferase (247 aa).

This sequence belongs to the KdsB family.

The protein resides in the cytoplasm. The catalysed reaction is 3-deoxy-alpha-D-manno-oct-2-ulosonate + CTP = CMP-3-deoxy-beta-D-manno-octulosonate + diphosphate. It participates in nucleotide-sugar biosynthesis; CMP-3-deoxy-D-manno-octulosonate biosynthesis; CMP-3-deoxy-D-manno-octulosonate from 3-deoxy-D-manno-octulosonate and CTP: step 1/1. The protein operates within bacterial outer membrane biogenesis; lipopolysaccharide biosynthesis. Functionally, activates KDO (a required 8-carbon sugar) for incorporation into bacterial lipopolysaccharide in Gram-negative bacteria. In Leptospira interrogans serogroup Icterohaemorrhagiae serovar Lai (strain 56601), this protein is 3-deoxy-manno-octulosonate cytidylyltransferase.